The following is a 393-amino-acid chain: Formate-dependent phosphoribosylglycinamide formyltransferase (393 aa).

Residues 22-23 (EL) and Glu-82 each bind N(1)-(5-phospho-beta-D-ribosyl)glycinamide. Residues Arg-114, Lys-155, 160–165 (SSGKGQ), 195–198 (EGFI), and Glu-203 contribute to the ATP site. The ATP-grasp domain occupies 119-308 (RLAAEELDLP…QFALHARAIL (190 aa)). The Mg(2+) site is built by Glu-267 and Glu-279. N(1)-(5-phospho-beta-D-ribosyl)glycinamide contacts are provided by residues Asp-286, Lys-356, and 363–364 (RR).

Belongs to the PurK/PurT family. Homodimer.

It carries out the reaction N(1)-(5-phospho-beta-D-ribosyl)glycinamide + formate + ATP = N(2)-formyl-N(1)-(5-phospho-beta-D-ribosyl)glycinamide + ADP + phosphate + H(+). It participates in purine metabolism; IMP biosynthesis via de novo pathway; N(2)-formyl-N(1)-(5-phospho-D-ribosyl)glycinamide from N(1)-(5-phospho-D-ribosyl)glycinamide (formate route): step 1/1. Functionally, involved in the de novo purine biosynthesis. Catalyzes the transfer of formate to 5-phospho-ribosyl-glycinamide (GAR), producing 5-phospho-ribosyl-N-formylglycinamide (FGAR). Formate is provided by PurU via hydrolysis of 10-formyl-tetrahydrofolate. The chain is Formate-dependent phosphoribosylglycinamide formyltransferase from Pseudomonas putida (strain W619).